Consider the following 200-residue polypeptide: Imidazoleglycerol-phosphate dehydratase (200 aa).

It belongs to the imidazoleglycerol-phosphate dehydratase family.

The protein resides in the cytoplasm. It catalyses the reaction D-erythro-1-(imidazol-4-yl)glycerol 3-phosphate = 3-(imidazol-4-yl)-2-oxopropyl phosphate + H2O. Its pathway is amino-acid biosynthesis; L-histidine biosynthesis; L-histidine from 5-phospho-alpha-D-ribose 1-diphosphate: step 6/9. The chain is Imidazoleglycerol-phosphate dehydratase from Chlorobium phaeobacteroides (strain BS1).